Consider the following 215-residue polypeptide: N-(5'-phosphoribosyl)anthranilate isomerase (215 aa).

The protein belongs to the TrpF family.

It carries out the reaction N-(5-phospho-beta-D-ribosyl)anthranilate = 1-(2-carboxyphenylamino)-1-deoxy-D-ribulose 5-phosphate. Its pathway is amino-acid biosynthesis; L-tryptophan biosynthesis; L-tryptophan from chorismate: step 3/5. The sequence is that of N-(5'-phosphoribosyl)anthranilate isomerase from Paracoccus denitrificans (strain Pd 1222).